Here is a 164-residue protein sequence, read N- to C-terminus: Large ribosomal subunit protein eL24z (164 aa).

Residues 117–133 (ERIKKTKDEKKAKKVEY) show a composition bias toward basic and acidic residues. The interval 117–164 (ERIKKTKDEKKAKKVEYASKQQKSQVKGNIPKSAAPKAAKMGGGGGRR) is disordered.

It belongs to the eukaryotic ribosomal protein eL24 family. As to quaternary structure, interacts with the cauliflower mosaic virus transactivator TAV to form a TAV/60S complex. Interacts with REIL1 AND REIL2.

In terms of biological role, might have an extraribosomal function in reinitiation of translation. This Arabidopsis thaliana (Mouse-ear cress) protein is Large ribosomal subunit protein eL24z (RPL24A).